Reading from the N-terminus, the 190-residue chain is Pancreatic IgW, short secretory form (190 aa).

The 93-residue stretch at 53–145 folds into the Ig-like C1-type domain; the sequence is PNITALVPSV…PPSNFRSMIS (93 aa). N-linked (GlcNAc...) asparagine glycosylation is present at Asn-54. A disulfide bridge links Cys-74 with Cys-131. Asn-179 is a glycosylation site (N-linked (GlcNAc...) asparagine).

In terms of tissue distribution, expressed in pancreas, spleen, epigonal organ and at low levels in several other tissues.

The protein resides in the secreted. The sequence is that of Pancreatic IgW, short secretory form from Ginglymostoma cirratum (Nurse shark).